Reading from the N-terminus, the 605-residue chain is Aspartate--tRNA(Asp/Asn) ligase (605 aa).

L-aspartate is bound at residue E176. The aspartate stretch occupies residues 200 to 203 (QQFK). Residues R222 and H452 each contribute to the L-aspartate site. 222–224 (RDE) serves as a coordination point for ATP. ATP is bound at residue E490. R497 contributes to the L-aspartate binding site. ATP is bound at residue 542 to 545 (GIDR).

This sequence belongs to the class-II aminoacyl-tRNA synthetase family. Type 1 subfamily. As to quaternary structure, homodimer.

The protein localises to the cytoplasm. It catalyses the reaction tRNA(Asx) + L-aspartate + ATP = L-aspartyl-tRNA(Asx) + AMP + diphosphate. Functionally, aspartyl-tRNA synthetase with relaxed tRNA specificity since it is able to aspartylate not only its cognate tRNA(Asp) but also tRNA(Asn). Reaction proceeds in two steps: L-aspartate is first activated by ATP to form Asp-AMP and then transferred to the acceptor end of tRNA(Asp/Asn). The sequence is that of Aspartate--tRNA(Asp/Asn) ligase from Rickettsia prowazekii (strain Madrid E).